A 191-amino-acid chain; its full sequence is Holliday junction branch migration complex subunit RuvA (191 aa).

The segment at 1 to 64 is domain I; the sequence is MIGSITGNVE…DNITQLYGFL (64 aa). Positions 65 to 142 are domain II; it reads NRQEQDYLKM…KMPIEETFSI (78 aa). Residues 143–146 are flexible linker; that stretch reads IEND. The tract at residues 146-191 is domain III; that stretch reads DDSLAALISLGYEKLKAFNVIQEIKSKTPDASTQEVIRKALQKLSQ.

The protein belongs to the RuvA family. In terms of assembly, homotetramer. Forms an RuvA(8)-RuvB(12)-Holliday junction (HJ) complex. HJ DNA is sandwiched between 2 RuvA tetramers; dsDNA enters through RuvA and exits via RuvB. An RuvB hexamer assembles on each DNA strand where it exits the tetramer. Each RuvB hexamer is contacted by two RuvA subunits (via domain III) on 2 adjacent RuvB subunits; this complex drives branch migration. In the full resolvosome a probable DNA-RuvA(4)-RuvB(12)-RuvC(2) complex forms which resolves the HJ.

It localises to the cytoplasm. Functionally, the RuvA-RuvB-RuvC complex processes Holliday junction (HJ) DNA during genetic recombination and DNA repair, while the RuvA-RuvB complex plays an important role in the rescue of blocked DNA replication forks via replication fork reversal (RFR). RuvA specifically binds to HJ cruciform DNA, conferring on it an open structure. The RuvB hexamer acts as an ATP-dependent pump, pulling dsDNA into and through the RuvAB complex. HJ branch migration allows RuvC to scan DNA until it finds its consensus sequence, where it cleaves and resolves the cruciform DNA. The sequence is that of Holliday junction branch migration complex subunit RuvA from Ehrlichia ruminantium (strain Welgevonden).